Consider the following 156-residue polypeptide: Small ribosomal subunit protein uS7 (156 aa).

Belongs to the universal ribosomal protein uS7 family. In terms of assembly, part of the 30S ribosomal subunit. Contacts proteins S9 and S11.

One of the primary rRNA binding proteins, it binds directly to 16S rRNA where it nucleates assembly of the head domain of the 30S subunit. Is located at the subunit interface close to the decoding center, probably blocks exit of the E-site tRNA. This chain is Small ribosomal subunit protein uS7, found in Alcanivorax borkumensis (strain ATCC 700651 / DSM 11573 / NCIMB 13689 / SK2).